Reading from the N-terminus, the 392-residue chain is MTLLGTALRPAATRVMLLGSGELGKEVAIECQRLGVEVIAVDRYADAPAMHVAHRSHVINMLDGDALRRVVELEKPHYIVPEIEAIATDMLIQLEEEGLNVVPCARATKLTMNREGIRRLAAEELQLPTSTYRFADSESLFREAVADIGYPCIVKPVMSSSGKGQTFIRSAEQLAQAWKYAQQGGRAGAGRVIVEGVVKFDFEITLLTVSAVDGVHFCAPVGHRQEDGDYRESWQPQQMSPLALERAQEIARKVVLALGGYGLFGVELFVCSDEVIFSEVSPRPHDTGMVTLISQDLSEFALHVRAFLGLPVGGIRQYGPAASAVILPQLTSQNVTFDNVQNAVGADLQIRLFGKPEIDGSRRLGVALATAESVVDAIERAKHAAGQVKVQG.

N(1)-(5-phospho-beta-D-ribosyl)glycinamide is bound by residues 22-23 (EL) and E82. Residues R114, K155, 160–165 (SSGKGQ), 195–198 (EGVV), and E203 each bind ATP. The ATP-grasp domain maps to 119 to 308 (RLAAEELQLP…EFALHVRAFL (190 aa)). Residues E267 and E279 each coordinate Mg(2+). Residues D286, K355, and 362–363 (RR) contribute to the N(1)-(5-phospho-beta-D-ribosyl)glycinamide site.

The protein belongs to the PurK/PurT family. As to quaternary structure, homodimer.

It catalyses the reaction N(1)-(5-phospho-beta-D-ribosyl)glycinamide + formate + ATP = N(2)-formyl-N(1)-(5-phospho-beta-D-ribosyl)glycinamide + ADP + phosphate + H(+). It functions in the pathway purine metabolism; IMP biosynthesis via de novo pathway; N(2)-formyl-N(1)-(5-phospho-D-ribosyl)glycinamide from N(1)-(5-phospho-D-ribosyl)glycinamide (formate route): step 1/1. Functionally, involved in the de novo purine biosynthesis. Catalyzes the transfer of formate to 5-phospho-ribosyl-glycinamide (GAR), producing 5-phospho-ribosyl-N-formylglycinamide (FGAR). Formate is provided by PurU via hydrolysis of 10-formyl-tetrahydrofolate. In Shigella boydii serotype 18 (strain CDC 3083-94 / BS512), this protein is Formate-dependent phosphoribosylglycinamide formyltransferase.